Consider the following 130-residue polypeptide: Small ribosomal subunit protein uS8 (130 aa).

Belongs to the universal ribosomal protein uS8 family. Part of the 30S ribosomal subunit. Contacts proteins S5 and S12.

Functionally, one of the primary rRNA binding proteins, it binds directly to 16S rRNA central domain where it helps coordinate assembly of the platform of the 30S subunit. This chain is Small ribosomal subunit protein uS8, found in Cereibacter sphaeroides (strain KD131 / KCTC 12085) (Rhodobacter sphaeroides).